A 418-amino-acid chain; its full sequence is Adenylosuccinate synthetase (418 aa).

GTP-binding positions include G12–K18 and G40–T42. D13 functions as the Proton acceptor in the catalytic mechanism. Residues D13 and G40 each coordinate Mg(2+). Residues D13 to K16, N38 to H41, T128, R142, Q221, T236, and R299 each bind IMP. Catalysis depends on H41, which acts as the Proton donor. A295–R301 serves as a coordination point for substrate. Residues R301, K327–D329, and S399–G401 each bind GTP.

This sequence belongs to the adenylosuccinate synthetase family. As to quaternary structure, homodimer. Mg(2+) serves as cofactor.

The protein localises to the cytoplasm. The catalysed reaction is IMP + L-aspartate + GTP = N(6)-(1,2-dicarboxyethyl)-AMP + GDP + phosphate + 2 H(+). It functions in the pathway purine metabolism; AMP biosynthesis via de novo pathway; AMP from IMP: step 1/2. Plays an important role in the de novo pathway of purine nucleotide biosynthesis. Catalyzes the first committed step in the biosynthesis of AMP from IMP. The polypeptide is Adenylosuccinate synthetase (Finegoldia magna (strain ATCC 29328 / DSM 20472 / WAL 2508) (Peptostreptococcus magnus)).